The primary structure comprises 633 residues: Leucine-rich repeat and IQ domain-containing protein 3 (633 aa).

LRR repeat units lie at residues 51–72, 73–94, and 98–119; these read SLRV…QGCK, KLIK…TFWN, and NLKL…CVLS. The 48-residue stretch at 132 to 179 folds into the LRRCT domain; it reads CPVSLKKGYRHVLVNSIWPLKALDHHVISDEEIIQNWHLPERFKTFSQ. Residues 215–244 enclose the IQ domain; that stretch reads HNSPVLIIQRWIRGFIVRKHLSPYFTRKRH. The segment at 322-343 is disordered; it reads NSKQPRHHIQKGQNEMKSDSED. Residues 556–616 adopt a coiled-coil conformation; sequence EKREKRKYKQ…AKVEFINTYY (61 aa).

This Rattus norvegicus (Rat) protein is Leucine-rich repeat and IQ domain-containing protein 3 (Lrriq3).